The primary structure comprises 427 residues: UBX domain-containing protein 10 (427 aa).

A coiled-coil region spans residues 247–311; it reads LERFRSEREA…VQKKKKQYRA (65 aa). In terms of domain architecture, UBX spans 323 to 425; that stretch reads SEDEPARLSI…FPNGTVVVEL (103 aa).

Its subcellular location is the endoplasmic reticulum. Involved in protein degradation through the ubiquitin/proteasome pathway. The chain is UBX domain-containing protein 10 (ucp10) from Schizosaccharomyces pombe (strain 972 / ATCC 24843) (Fission yeast).